The chain runs to 272 residues: Ethanolamine ammonia-lyase small subunit (272 aa).

3 residues coordinate adenosylcob(III)alamin: valine 161, glutamate 182, and cysteine 211.

It belongs to the EutC family. As to quaternary structure, the basic unit is a heterodimer which dimerizes to form tetramers. The heterotetramers trimerize; 6 large subunits form a core ring with 6 small subunits projecting outwards. It depends on adenosylcob(III)alamin as a cofactor.

It localises to the bacterial microcompartment. It carries out the reaction ethanolamine = acetaldehyde + NH4(+). Its pathway is amine and polyamine degradation; ethanolamine degradation. Its function is as follows. Catalyzes the deamination of various vicinal amino-alcohols to oxo compounds. Allows this organism to utilize ethanolamine as the sole source of nitrogen and carbon in the presence of external vitamin B12. This chain is Ethanolamine ammonia-lyase small subunit, found in Xanthomonas campestris pv. campestris (strain ATCC 33913 / DSM 3586 / NCPPB 528 / LMG 568 / P 25).